The following is a 158-amino-acid chain: Crossover junction endodeoxyribonuclease RuvC (158 aa).

Catalysis depends on residues aspartate 7, glutamate 66, and aspartate 139. Aspartate 7, glutamate 66, and aspartate 139 together coordinate Mg(2+).

The protein belongs to the RuvC family. As to quaternary structure, homodimer which binds Holliday junction (HJ) DNA. The HJ becomes 2-fold symmetrical on binding to RuvC with unstacked arms; it has a different conformation from HJ DNA in complex with RuvA. In the full resolvosome a probable DNA-RuvA(4)-RuvB(12)-RuvC(2) complex forms which resolves the HJ. Mg(2+) is required as a cofactor.

Its subcellular location is the cytoplasm. The enzyme catalyses Endonucleolytic cleavage at a junction such as a reciprocal single-stranded crossover between two homologous DNA duplexes (Holliday junction).. In terms of biological role, the RuvA-RuvB-RuvC complex processes Holliday junction (HJ) DNA during genetic recombination and DNA repair. Endonuclease that resolves HJ intermediates. Cleaves cruciform DNA by making single-stranded nicks across the HJ at symmetrical positions within the homologous arms, yielding a 5'-phosphate and a 3'-hydroxyl group; requires a central core of homology in the junction. The consensus cleavage sequence is 5'-(A/T)TT(C/G)-3'. Cleavage occurs on the 3'-side of the TT dinucleotide at the point of strand exchange. HJ branch migration catalyzed by RuvA-RuvB allows RuvC to scan DNA until it finds its consensus sequence, where it cleaves and resolves the cruciform DNA. The protein is Crossover junction endodeoxyribonuclease RuvC of Campylobacter lari (strain RM2100 / D67 / ATCC BAA-1060).